The sequence spans 591 residues: Aspartate--tRNA(Asp/Asn) ligase (591 aa).

An L-aspartate-binding site is contributed by glutamate 174. The tract at residues 198–201 (QLFK) is aspartate. L-aspartate is bound at residue arginine 220. ATP is bound by residues 220–222 (RDE) and glutamine 229. Residue histidine 450 coordinates L-aspartate. ATP is bound at residue glutamate 483. L-aspartate is bound at residue arginine 490. Residue 535 to 538 (GLDR) participates in ATP binding.

The protein belongs to the class-II aminoacyl-tRNA synthetase family. Type 1 subfamily. In terms of assembly, homodimer.

The protein resides in the cytoplasm. The catalysed reaction is tRNA(Asx) + L-aspartate + ATP = L-aspartyl-tRNA(Asx) + AMP + diphosphate. Its function is as follows. Aspartyl-tRNA synthetase with relaxed tRNA specificity since it is able to aspartylate not only its cognate tRNA(Asp) but also tRNA(Asn). Reaction proceeds in two steps: L-aspartate is first activated by ATP to form Asp-AMP and then transferred to the acceptor end of tRNA(Asp/Asn). This is Aspartate--tRNA(Asp/Asn) ligase from Pseudomonas putida (strain GB-1).